A 160-amino-acid chain; its full sequence is Phosphopantetheine adenylyltransferase (160 aa).

Position 9 (Ser9) interacts with substrate. Residues 9-10 (SF) and His17 each bind ATP. Residues Lys41, Thr73, and Arg87 each coordinate substrate. Residues 88–90 (GMR), Glu98, and 123–129 (YTFFSSS) contribute to the ATP site.

This sequence belongs to the bacterial CoaD family. In terms of assembly, homohexamer. It depends on Mg(2+) as a cofactor.

Its subcellular location is the cytoplasm. It catalyses the reaction (R)-4'-phosphopantetheine + ATP + H(+) = 3'-dephospho-CoA + diphosphate. Its pathway is cofactor biosynthesis; coenzyme A biosynthesis; CoA from (R)-pantothenate: step 4/5. Its function is as follows. Reversibly transfers an adenylyl group from ATP to 4'-phosphopantetheine, yielding dephospho-CoA (dPCoA) and pyrophosphate. This is Phosphopantetheine adenylyltransferase from Roseiflexus castenholzii (strain DSM 13941 / HLO8).